A 159-amino-acid chain; its full sequence is U1 small nuclear ribonucleoprotein C (159 aa).

A Matrin-type zinc finger spans residues Phe-4 to Asp-36. Positions Lys-61–Gly-99 are disordered. Composition is skewed to pro residues over residues Pro-63–Gly-74 and Gly-84–Gly-99.

Belongs to the U1 small nuclear ribonucleoprotein C family. Component of the U1 snRNP. The U1 snRNP is composed of the U1 snRNA and the 7 core Sm proteins snrpb, snrpd1, snrpd2, snrpd3, snrpe, snrpf and snrpg that assemble in a heptameric protein ring on the Sm site of the small nuclear RNA to form the core snRNP, and at least 3 U1 snRNP-specific proteins snrnp70/U1-70K, snrpa/U1-A and snrpc/U1-C. snrpc/U1-C interacts with U1 snRNA and the 5' splice-site region of the pre-mRNA.

Its subcellular location is the nucleus. Its function is as follows. Component of the spliceosomal U1 snRNP, which is essential for recognition of the pre-mRNA 5' splice-site and the subsequent assembly of the spliceosome. snrpc/U1-C is directly involved in initial 5' splice-site recognition for both constitutive and regulated alternative splicing. The interaction with the 5' splice-site seems to precede base-pairing between the pre-mRNA and the U1 snRNA. Stimulates commitment or early (E) complex formation by stabilizing the base pairing of the 5' end of the U1 snRNA and the 5' splice-site region. The polypeptide is U1 small nuclear ribonucleoprotein C (Danio rerio (Zebrafish)).